The chain runs to 227 residues: MAYPFQLGLQDATSPIMEELMNFHDHTLMIVFLISSLVLYIISLMLTTKLTHTSTMDAQEVETIWTILPAVILIMIALPSLRILYMMDEINNPVLTVKTMGHQWYWSYEYTDYEDLCFDSYMIPTNDLKPGELRLLEVDNRVVLPMELPIRMLISSEDVLHSWAVPSLGLKTDAIPGRLNQATVTSNRPGLFYGQCSEICGSNHSFMPIVLEMVPLKYFENWSASMI.

At 1–22 (MAYPFQLGLQDATSPIMEELMN) the chain is on the mitochondrial intermembrane side. A helical membrane pass occupies residues 23-44 (FHDHTLMIVFLISSLVLYIISL). Residues 45-60 (MLTTKLTHTSTMDAQE) lie on the Mitochondrial matrix side of the membrane. Residues 61-81 (VETIWTILPAVILIMIALPSL) form a helical membrane-spanning segment. Residues 82-227 (RILYMMDEIN…YFENWSASMI (146 aa)) lie on the Mitochondrial intermembrane side of the membrane. His-161, Cys-196, Glu-198, Cys-200, His-204, and Met-207 together coordinate Cu cation. Glu-198 contacts Mg(2+). At Tyr-218 the chain carries Phosphotyrosine.

It belongs to the cytochrome c oxidase subunit 2 family. As to quaternary structure, component of the cytochrome c oxidase (complex IV, CIV), a multisubunit enzyme composed of 14 subunits. The complex is composed of a catalytic core of 3 subunits MT-CO1, MT-CO2 and MT-CO3, encoded in the mitochondrial DNA, and 11 supernumerary subunits COX4I, COX5A, COX5B, COX6A, COX6B, COX6C, COX7A, COX7B, COX7C, COX8 and NDUFA4, which are encoded in the nuclear genome. The complex exists as a monomer or a dimer and forms supercomplexes (SCs) in the inner mitochondrial membrane with NADH-ubiquinone oxidoreductase (complex I, CI) and ubiquinol-cytochrome c oxidoreductase (cytochrome b-c1 complex, complex III, CIII), resulting in different assemblies (supercomplex SCI(1)III(2)IV(1) and megacomplex MCI(2)III(2)IV(2)). Found in a complex with TMEM177, COA6, COX18, COX20, SCO1 and SCO2. Interacts with TMEM177 in a COX20-dependent manner. Interacts with COX20. Interacts with COX16. The cofactor is Cu cation.

It is found in the mitochondrion inner membrane. It catalyses the reaction 4 Fe(II)-[cytochrome c] + O2 + 8 H(+)(in) = 4 Fe(III)-[cytochrome c] + 2 H2O + 4 H(+)(out). Functionally, component of the cytochrome c oxidase, the last enzyme in the mitochondrial electron transport chain which drives oxidative phosphorylation. The respiratory chain contains 3 multisubunit complexes succinate dehydrogenase (complex II, CII), ubiquinol-cytochrome c oxidoreductase (cytochrome b-c1 complex, complex III, CIII) and cytochrome c oxidase (complex IV, CIV), that cooperate to transfer electrons derived from NADH and succinate to molecular oxygen, creating an electrochemical gradient over the inner membrane that drives transmembrane transport and the ATP synthase. Cytochrome c oxidase is the component of the respiratory chain that catalyzes the reduction of oxygen to water. Electrons originating from reduced cytochrome c in the intermembrane space (IMS) are transferred via the dinuclear copper A center (CU(A)) of subunit 2 and heme A of subunit 1 to the active site in subunit 1, a binuclear center (BNC) formed by heme A3 and copper B (CU(B)). The BNC reduces molecular oxygen to 2 water molecules using 4 electrons from cytochrome c in the IMS and 4 protons from the mitochondrial matrix. This chain is Cytochrome c oxidase subunit 2 (Mtco2), found in Mus musculus (Mouse).